The chain runs to 66 residues: Large ribosomal subunit protein bL35 (66 aa).

2 stretches are compositionally biased toward basic residues: residues 1–15 (MPKL…KRFK) and 28–45 (TKRH…RTRR). Residues 1 to 49 (MPKLKTKSSAKKRFKVTASGRVMSAQSTKRHGMTKRSKRSLRTRRGIAQ) form a disordered region.

This sequence belongs to the bacterial ribosomal protein bL35 family.

The sequence is that of Large ribosomal subunit protein bL35 from Anaplasma marginale (strain Florida).